Here is a 219-residue protein sequence, read N- to C-terminus: Large ribosomal subunit protein bL31m (219 aa).

Basic and acidic residues-rich tracts occupy residues Lys169–Glu181 and Lys210–Lys219. Disordered stretches follow at residues Lys169–Phe188 and Thr200–Lys219.

The protein belongs to the bacterial ribosomal protein bL31 family. Highly divergent. In terms of assembly, component of the mitochondrial large ribosomal subunit (mt-LSU). Mature N.crassa 74S mitochondrial ribosomes consist of a small (37S) and a large (54S) subunit. The 37S small subunit contains a 16S ribosomal RNA (16S mt-rRNA) and 32 different proteins. The 54S large subunit contains a 23S rRNA (23S mt-rRNA) and 42 different proteins. bL31m bridges the mt-LSU central protuberance and the mt-SSU head.

It localises to the mitochondrion. Component of the mitochondrial ribosome (mitoribosome), a dedicated translation machinery responsible for the synthesis of mitochondrial genome-encoded proteins, including at least some of the essential transmembrane subunits of the mitochondrial respiratory chain. The mitoribosomes are attached to the mitochondrial inner membrane and translation products are cotranslationally integrated into the membrane. The sequence is that of Large ribosomal subunit protein bL31m (mrpl36) from Neurospora crassa (strain ATCC 24698 / 74-OR23-1A / CBS 708.71 / DSM 1257 / FGSC 987).